Consider the following 1349-residue polypeptide: MEARSRSAEELRRAELVEIIVETEAQTGVSGINVAGGGKEGIFVRDLREDSPAARSLSLQEGDQLLSARVFFENFKYEDALRLLQCAEPYKVSFCLKRTVPTGDLALRPGTVAGYEIKGPRAKVAKLNIQSLSPVKKKKMVMPGALGAPADLAPVDVEFSFPKFSRLRRGLKAEAVEGPVPAAPTRRRLQLPRLRVREVAEEAQVARLAAAAPPPRKAKAEAEVAAGPRFTAPQVELVGPRLPGAEVGVPQVPAPKREAAPAVEPAAVGIQVPQVELPSLPSLPALPTLPCLETREGAVAVTVPTLDVAAPTVGVDLALPGAEVEPREEVPEVALKMPRLSFPRFGARAKEAAEAKVKGPKLRMPTFGLSLLEPRPAVPEAPESKLKLPTIKIPSFGIGVSPPEVKVPKGPEVKPPKVPEVKLPKMPEPVLPEVRLPEVELPKVSEMKLPKVPEMAVPEVRLPEVQLPKVPEMKLPEVKLPKVPEMAVPEVHLPEVQLPKVPEMKLPEVKLPKVPEMAVPEVRLPEVQLPKVPEMKLPKVPEMKCPEMKLPKVPEMAVPEVRLPEVQLPKVPEVKLPEVKLPEVKLPKVPEMAVPEVHLPEVQLPKVSEMKVPDVKLPEVKLPEIKLPKVPEMVVPDVHLPQVHLPKVSEMRLPEVQAPKVPEVHLPKAPEVKLPKAPEAQLKAARVEEAEGMDFGFKMPKMTLPKLGRAESPSQGKPGEAGAEVSGKLVTLPCLQPEVGSEARVGVPRLTLPSVELDLPGALGLEGQAAAAEVGKGEQAEAAGVGEVAFRLPSVEIVTPQLPTLDEGQAEVTEAKVKLSSKFSLPKFGLSGPKVTKPEAEGAGRAAKLKVSKFAISLPRARVGTEVEAKGTEEAGLLPALDLSIPQLSLDSHLPTGKAEVAGADIKLKGPKFGLPKFGVRGRDTEAGELVPGAAELEGKSRGWDGKVKMPKLKMPSFGLARGKEADISGGQVSPGEKPESTAVQLKIPEVELVTLGAQEEGRVEEEAAGSRGRLAGLQVSPAKQVGTEAQDGGLRMPLGISLPQVELTGFREATPGQQAESSAPPAEGTAGYRVHVPQVTLALPGAQAVGGELLVGEGVFKMPSVTVPQLELDVGLSREVQDGEAATSEGGLKLKVPTLGARAGAGAEGPSDQSAGAERTFHLSLPDVELSPPAVGTHAEYQVAEGEGDAGHKLKVRLPRFGLARAKEGAEEGEKAKSPKLKLPHVGFSQSEAVSGEGSPSPEEEDVEGGGEGASGRRGRVRVRLPRVGLAAPSKASRGQEGKAAPKSPSGEKSPKFRFPRVSLSPKTRGGSGDQDEGGFRVRLPSVGFSETGPPGPTRMEGAQAAVI.

S7 bears the Phosphoserine mark. The 84-residue stretch at 16 to 99 folds into the PDZ domain; that stretch reads LVEIIVETEA…YKVSFCLKRT (84 aa). A Nuclear export signal motif is present at residues 70 to 84; it reads VFFENFKYEDALRLL. S133 carries the post-translational modification Phosphoserine. 41 consecutive repeat copies span residues 402–406, 410–414, 418–422, 426–430, 431–435, 436–440, 444–448, 452–456, 457–461, 462–466, 467–471, 472–476, 477–481, 485–489, 493–497, 501–505, 506–510, 514–518, 519–523, 524–528, 532–536, 537–549, 553–557, 558–562, 563–567, 571–575, 576–580, 589–593, 594–598, 599–603, 612–616, 617–621, 622–626, 630–634, 635–639, 643–647, 648–652, 653–657, 661–665, 669–673, and 674–678. Residues 402 to 678 are 41 X 5 AA approximate tandem repeats of [LVMGIE]-[PSM]-[EDKA]-[LIVMA]-[AQKHPRT]; that may have a tripeptide spacer of [ALKD]-[IPV]-[KPH]; the sequence is PPEVKVPKGP…APEVKLPKAP (277 aa). S794 and S974 each carry phosphoserine. The segment covering 1207 to 1218 has biased composition (basic and acidic residues); that stretch reads AKEGAEEGEKAK. Residues 1207 to 1349 form a disordered region; that stretch reads AKEGAEEGEK…RMEGAQAAVI (143 aa). Residues 1232-1242 are compositionally biased toward low complexity; the sequence is SEAVSGEGSPS. S1236, S1240, S1242, S1289, S1295, and S1327 each carry phosphoserine.

The protein belongs to the periaxin family. In terms of assembly, homodimer (via PDZ domain). Interacts with SCN10A. Found in a complex with SCN10A. Interacts with DRP2. Identified in a dystroglycan complex that contains at least PRX, DRP2, UTRN, DMD and DAG1. Detected in a complex composed of at least EZR, AHNAK, PPL and PRX. Identified in a complex with EZR, AHNAK, BFSP1, BFSP2, ANK2, PLEC, VIM and spectrin. In terms of tissue distribution, detected in eye lens (at protein level).

Its subcellular location is the nucleus. It is found in the cytoplasm. It localises to the cell membrane. The protein resides in the cell junction. The protein localises to the adherens junction. Its function is as follows. Scaffolding protein that functions as part of a dystroglycan complex in Schwann cells, and as part of EZR and AHNAK-containing complexes in eye lens fiber cells. Required for the maintenance of the peripheral myelin sheath that is essential for normal transmission of nerve impulses and normal perception of sensory stimuli. Required for normal transport of MBP mRNA from the perinuclear to the paranodal regions. Required for normal remyelination after nerve injury. Required for normal elongation of Schwann cells and normal length of the internodes between the nodes of Ranvier. The demyelinated nodes of Ranvier permit saltatory transmission of nerve impulses; shorter internodes cause slower transmission of nerve impulses. Required for the formation of appositions between the abaxonal surface of the myelin sheath and the Schwann cell plasma membrane; the Schwann cell cytoplasm is restricted to regions between these appositions. Required for the formation of Cajal bands and of Schmidt-Lanterman incisures that correspond to short, cytoplasm-filled regions on myelinated nerves. Recruits DRP2 to the Schwann cell plasma membrane. Required for normal protein composition of the eye lens fiber cell plasma membrane and normal eye lens fiber cell morphology. The sequence is that of Periaxin (PRX) from Bos taurus (Bovine).